The chain runs to 265 residues: MPVVSLAQMMESGVHFGHQTRRWNPKMSPYIYTSRNGVHIIDLVQTAHLMDEAYNYMRSQAEQGKKFLFVGTKRQAAGIIAQEAARCGSHYINQRWLGGMLTNWATIKTRVDRLKDLERREESGALDLLPKKEASMLRRELAKLQKYLGGIKTMRKVPDVVVIVDQRREYNAVQECQKLSIPIVSMLDTNCDPDVVDIPIPANDDAIRSIKLIVGKLADAIYEGRHGQLDVEEEYEDYEGSEEDYDYDETEYADSVIPEDGEEAE.

The disordered stretch occupies residues 231-265 (VEEEYEDYEGSEEDYDYDETEYADSVIPEDGEEAE).

It belongs to the universal ribosomal protein uS2 family.

The protein is Small ribosomal subunit protein uS2 of Nostoc sp. (strain PCC 7120 / SAG 25.82 / UTEX 2576).